Here is a 1139-residue protein sequence, read N- to C-terminus: Tip attachment protein J (1139 aa).

Belongs to the Caudoviricetes tip attachment protein J family. Post-translationally, ubiquitinated by the Bil antiviral defense system when the Bil system is expressed in E.coli MG1655 and infected with this virus, or when this protein is expressed in a strain with the Bil system.

The protein localises to the virion. It is found in the host cytoplasm. Functionally, attaches the virion to the host receptor, inducing viral DNA ejection. During tail assembly, initiates distal tail tip assembly. During virus entry to host cell, binds strongly to host receptor in an irreversible attachment. The binding induces structural changes in the tail leading to viral DNA injection. This is Tip attachment protein J from Escherichia phage SECphi4.